The chain runs to 253 residues: E3 ubiquitin-protein ligase MARCHF3 (253 aa).

The RING-CH-type zinc finger occupies 63–123 (SPFNDRPMCR…ELCHFRFAVE (61 aa)). Zn(2+) contacts are provided by Cys71, Cys74, Cys87, Cys89, His97, Cys100, Cys113, and Cys116. Transmembrane regions (helical) follow at residues 145 to 165 (LFGD…SGWL) and 182 to 202 (AVGL…WTLV). Phosphoserine occurs at positions 237 and 243.

In terms of assembly, interacts with MARCHF2 and STX6.

It is found in the cytoplasmic vesicle membrane. The protein localises to the early endosome membrane. The enzyme catalyses S-ubiquitinyl-[E2 ubiquitin-conjugating enzyme]-L-cysteine + [acceptor protein]-L-lysine = [E2 ubiquitin-conjugating enzyme]-L-cysteine + N(6)-ubiquitinyl-[acceptor protein]-L-lysine.. It participates in protein modification; protein ubiquitination. Its function is as follows. E3 ubiquitin-protein ligase which may be involved in endosomal trafficking. E3 ubiquitin ligases accept ubiquitin from an E2 ubiquitin-conjugating enzyme in the form of a thioester and then directly transfer the ubiquitin to targeted substrates. The chain is E3 ubiquitin-protein ligase MARCHF3 from Homo sapiens (Human).